The primary structure comprises 154 residues: Putative NADPH-dependent 7-cyano-7-deazaguanine reductase (154 aa).

The active-site Proton donor is the Asp52. Residues 67–69 and 86–87 each bind substrate; these read VES and HE.

This sequence belongs to the GTP cyclohydrolase I family. QueF type 1 subfamily.

Its subcellular location is the cytoplasm. The enzyme catalyses 7-aminomethyl-7-carbaguanine + 2 NADP(+) = 7-cyano-7-deazaguanine + 2 NADPH + 3 H(+). It functions in the pathway tRNA modification; tRNA-queuosine biosynthesis. Its function is as follows. Catalyzes the NADPH-dependent reduction of 7-cyano-7-deazaguanine (preQ0) to 7-aminomethyl-7-deazaguanine (preQ1). The protein is Putative NADPH-dependent 7-cyano-7-deazaguanine reductase of Streptococcus pneumoniae serotype 4 (strain ATCC BAA-334 / TIGR4).